Here is a 210-residue protein sequence, read N- to C-terminus: Thymidylate kinase (210 aa).

10–17 (GPEGAGKS) is a binding site for ATP.

This sequence belongs to the thymidylate kinase family.

It catalyses the reaction dTMP + ATP = dTDP + ADP. Functionally, phosphorylation of dTMP to form dTDP in both de novo and salvage pathways of dTTP synthesis. The polypeptide is Thymidylate kinase (Pseudomonas aeruginosa (strain LESB58)).